A 906-amino-acid polypeptide reads, in one-letter code: Cadherin-2 (906 aa).

The signal sequence occupies residues 1 to 25 (MCRIAGALRTLLPLLAALLQASVEA). Residues 26–159 (SGEIALCKTG…HSGHLQRQKR (134 aa)) constitute a propeptide that is removed on maturation. Phosphoserine; by FAM20C occurs at positions 96 and 135. Cadherin domains follow at residues 160–267 (DWVI…RPEF), 268–382 (LHQV…PPEF), 383–497 (TAMT…NPYF), 498–603 (APNP…DNAP), and 604–714 (QVLP…DVDR). The Extracellular portion of the chain corresponds to 160–724 (DWVIPPINLP…IVGAGLGTGA (565 aa)). Ca(2+) is bound at residue glutamate 170. Residue asparagine 190 is glycosylated (N-linked (GlcNAc...) asparagine). Ca(2+) contacts are provided by aspartate 226, glutamate 228, aspartate 259, methionine 260, asparagine 261, aspartate 262, and asparagine 263. A glycan (N-linked (GlcNAc...) asparagine) is linked at asparagine 273. Aspartate 293, aspartate 295, and asparagine 301 together coordinate Ca(2+). Asparagine 325 is a glycosylation site (N-linked (GlcNAc...) asparagine). Aspartate 353 is a Ca(2+) binding site. N-linked (GlcNAc...) asparagine glycans are attached at residues asparagine 402, asparagine 572, asparagine 651, and asparagine 692. The helical transmembrane segment at 725–745 (IIAILLCIIILLILVLMFVVW) threads the bilayer. Residues 746–906 (MKRRDKERQA…LADMYGGGDD (161 aa)) are Cytoplasmic-facing. The span at 863–880 (SGSTAGSLSSLNSSSSGG) shows a compositional bias: low complexity. The disordered stretch occupies residues 863–884 (SGSTAGSLSSLNSSSSGGEQDY).

Homodimer (via extracellular region). Can also form heterodimers with other cadherins (via extracellular region). Dimerization occurs in trans, i.e. with a cadherin chain from another cell. Interacts with CDCP1. Interacts with PCDH8; this complex may also include TAOK2. The interaction with PCDH8 may lead to internalization through TAOK2/p38 MAPK pathway. Identified in a complex containing FGFR4, NCAM1, CDH2, PLCG1, FRS2, SRC, SHC1, GAP43 and CTTN. May interact with OBSCN (via protein kinase domain 2). Interacts with FBXO45. Post-translationally, cleaved by MMP24. Ectodomain cleavage leads to the generation of a soluble 90 kDa N-terminal soluble fragment and a 45 kDa membrane-bound C-terminal fragment 1 (CTF1), which is further cleaved by gamma-secretase into a 35 kDa. Cleavage in neural stem cells by MMP24 affects CDH2-mediated anchorage of neural stem cells to ependymocytes in the adult subependymal zone, leading to modulate neural stem cell quiescence. In terms of processing, may be phosphorylated by OBSCN.

It is found in the cell membrane. Its subcellular location is the sarcolemma. It localises to the cell junction. The protein localises to the cell surface. The protein resides in the desmosome. It is found in the adherens junction. Its function is as follows. Calcium-dependent cell adhesion protein; preferentially mediates homotypic cell-cell adhesion by dimerization with a CDH2 chain from another cell. Cadherins may thus contribute to the sorting of heterogeneous cell types. Acts as a regulator of neural stem cells quiescence by mediating anchorage of neural stem cells to ependymocytes in the adult subependymal zone: upon cleavage by MMP24, CDH2-mediated anchorage is affected, leading to modulate neural stem cell quiescence. Plays a role in cell-to-cell junction formation between pancreatic beta cells and neural crest stem (NCS) cells, promoting the formation of processes by NCS cells. Required for proper neurite branching. Required for pre- and postsynaptic organization. CDH2 may be involved in neuronal recognition mechanism. In hippocampal neurons, may regulate dendritic spine density. This Homo sapiens (Human) protein is Cadherin-2 (CDH2).